The primary structure comprises 272 residues: EID1-like F-box protein 3 (272 aa).

Residues 29-81 form the F-box domain; it reads SGKSGIENERVLVLVFESISWDIHTLCTIASLSRRFCAIARRILWRRLCVNRA.

In Arabidopsis thaliana (Mouse-ear cress), this protein is EID1-like F-box protein 3 (EDL3).